A 181-amino-acid polypeptide reads, in one-letter code: Small ribosomal subunit protein uS4 (181 aa).

The S4 RNA-binding domain maps to 106–168 (RRLQTLVYRK…PTSRIVKAKV (63 aa)).

This sequence belongs to the universal ribosomal protein uS4 family. Part of the 30S ribosomal subunit. Contacts protein S5. The interaction surface between S4 and S5 is involved in control of translational fidelity.

In terms of biological role, one of the primary rRNA binding proteins, it binds directly to 16S rRNA where it nucleates assembly of the body of the 30S subunit. Functionally, with S5 and S12 plays an important role in translational accuracy. This chain is Small ribosomal subunit protein uS4, found in Caldivirga maquilingensis (strain ATCC 700844 / DSM 13496 / JCM 10307 / IC-167).